A 334-amino-acid chain; its full sequence is Heat-inducible transcription repressor HrcA (334 aa).

This sequence belongs to the HrcA family.

Functionally, negative regulator of class I heat shock genes (grpE-dnaK-dnaJ and groELS operons). Prevents heat-shock induction of these operons. The polypeptide is Heat-inducible transcription repressor HrcA (Paracidovorax citrulli (strain AAC00-1) (Acidovorax citrulli)).